Reading from the N-terminus, the 100-residue chain is Large ribosomal subunit protein uL23 (100 aa).

Belongs to the universal ribosomal protein uL23 family. Part of the 50S ribosomal subunit. Contacts protein L29, and trigger factor when it is bound to the ribosome.

Its function is as follows. One of the early assembly proteins it binds 23S rRNA. One of the proteins that surrounds the polypeptide exit tunnel on the outside of the ribosome. Forms the main docking site for trigger factor binding to the ribosome. The polypeptide is Large ribosomal subunit protein uL23 (Rippkaea orientalis (strain PCC 8801 / RF-1) (Cyanothece sp. (strain PCC 8801))).